The chain runs to 137 residues: Large ribosomal subunit protein uL16 (137 aa).

This sequence belongs to the universal ribosomal protein uL16 family. Part of the 50S ribosomal subunit.

In terms of biological role, binds 23S rRNA and is also seen to make contacts with the A and possibly P site tRNAs. The sequence is that of Large ribosomal subunit protein uL16 from Coxiella burnetii (strain RSA 331 / Henzerling II).